The sequence spans 153 residues: Hsp90 co-chaperone HCH1 (153 aa).

It belongs to the AHA1 family. As to quaternary structure, monomer. Interacts with HSP82.

It is found in the cytoplasm. The protein localises to the nucleus. Co-chaperone that binds to the molecular chaperone HSP82 and stimulates its ATPase activity. Although not essential, it confers thermotolerance when intracellular levels of HSP82 are limiting. The protein is Hsp90 co-chaperone HCH1 (HCH1) of Saccharomyces cerevisiae (strain ATCC 204508 / S288c) (Baker's yeast).